Consider the following 431-residue polypeptide: Glutamate--tRNA ligase 1 (431 aa).

The 'HIGH' region motif lies at 6–16 (PSPTGDMHIGN). The 'KMSKS' region signature appears at 235–239 (KMSKR). K238 is a binding site for ATP.

The protein belongs to the class-I aminoacyl-tRNA synthetase family. Glutamate--tRNA ligase type 1 subfamily. Monomer.

The protein resides in the cytoplasm. The catalysed reaction is tRNA(Glu) + L-glutamate + ATP = L-glutamyl-tRNA(Glu) + AMP + diphosphate. In terms of biological role, catalyzes the attachment of glutamate to tRNA(Glu) in a two-step reaction: glutamate is first activated by ATP to form Glu-AMP and then transferred to the acceptor end of tRNA(Glu). The chain is Glutamate--tRNA ligase 1 from Campylobacter jejuni subsp. jejuni serotype O:6 (strain 81116 / NCTC 11828).